Here is a 74-residue protein sequence, read N- to C-terminus: MFESTRKNIQPSDATLVITQTRGVTGSKQNHRDTLRSLGLKRIGHQVTRKADAVTVGMVNTVPHLVSVEEVNNG.

This sequence belongs to the universal ribosomal protein uL30 family. In terms of assembly, part of the 50S ribosomal subunit.

The sequence is that of Large ribosomal subunit protein uL30 from Micrococcus luteus (strain ATCC 4698 / DSM 20030 / JCM 1464 / CCM 169 / CCUG 5858 / IAM 1056 / NBRC 3333 / NCIMB 9278 / NCTC 2665 / VKM Ac-2230) (Micrococcus lysodeikticus).